The chain runs to 171 residues: Mitochondrial import inner membrane translocase subunit Tim17-A (171 aa).

C9 and C78 are joined by a disulfide. The next 3 membrane-spanning stretches (helical) occupy residues 17–37, 63–77, and 113–133; these read CGGA…FKGF, GGSF…STID, and VGSA…GILL. Residues 147–171 form a disordered region; the sequence is FAEDHSQLPSSQLPSSPFGDYRQYQ. Over residues 153–163 the composition is skewed to low complexity; it reads QLPSSQLPSSP.

It belongs to the Tim17/Tim22/Tim23 family. In terms of assembly, component of the TIM23 complex at least composed of TIMM23, TIMM17 (TIMM17A or TIMM17B) and TIMM50. The complex interacts with the TIMM44 component of the PAM complex and with DNAJC15. Post-translationally, degraded by YMEL1 downstream of the integrated stress response (ISR).

It is found in the mitochondrion inner membrane. In terms of biological role, essential component of the TIM23 complex, a complex that mediates the translocation of transit peptide-containing proteins across the mitochondrial inner membrane. In Rattus norvegicus (Rat), this protein is Mitochondrial import inner membrane translocase subunit Tim17-A (Timm17a).